A 287-amino-acid chain; its full sequence is Protease HtpX (287 aa).

Helical transmembrane passes span 4 to 24 (IFLLIATNMAILLVASIVMSI) and 33 to 53 (GGLLVFAAIFGFGGAFISLAI). Histidine 139 contacts Zn(2+). Glutamate 140 is a catalytic residue. Histidine 143 lines the Zn(2+) pocket. Helical transmembrane passes span 154–174 (LIQGVVNTFVIFAARVVASII) and 195–215 (AVVFVLDMLFGILASMIVAYF). Residue glutamate 220 coordinates Zn(2+).

It belongs to the peptidase M48B family. Requires Zn(2+) as cofactor.

It localises to the cell inner membrane. This Shewanella loihica (strain ATCC BAA-1088 / PV-4) protein is Protease HtpX.